The chain runs to 231 residues: LexA repressor (231 aa).

The H-T-H motif DNA-binding region spans 26–46 (FDEMKLALDLRSKSGIHRLIT). The tract at residues 79 to 98 (VGFQPRVIDGDRPDRPRPAN) is disordered. Residues 86 to 95 (IDGDRPDRPR) are compositionally biased toward basic and acidic residues. Active-site for autocatalytic cleavage activity residues include serine 152 and lysine 190.

The protein belongs to the peptidase S24 family. In terms of assembly, homodimer.

The enzyme catalyses Hydrolysis of Ala-|-Gly bond in repressor LexA.. Represses a number of genes involved in the response to DNA damage (SOS response), including recA and lexA. In the presence of single-stranded DNA, RecA interacts with LexA causing an autocatalytic cleavage which disrupts the DNA-binding part of LexA, leading to derepression of the SOS regulon and eventually DNA repair. This chain is LexA repressor, found in Ruegeria pomeroyi (strain ATCC 700808 / DSM 15171 / DSS-3) (Silicibacter pomeroyi).